Consider the following 132-residue polypeptide: NAD(P) transhydrogenase subunit alpha part 2 (132 aa).

The next 3 membrane-spanning stretches (helical) occupy residues 43 to 63 (PLVFAITIFVLASFVGYYVVW), 72 to 92 (PLMSITNAISGIIVISSMIAI), and 103 to 123 (LLGSFATLLASINIFGGFIVT).

Complex of an alpha and a beta chain; in Rickettsia, the alpha chain seems to be made of two subunits.

It localises to the cell inner membrane. The enzyme catalyses NAD(+) + NADPH + H(+)(in) = NADH + NADP(+) + H(+)(out). In terms of biological role, the transhydrogenation between NADH and NADP is coupled to respiration and ATP hydrolysis and functions as a proton pump across the membrane. The chain is NAD(P) transhydrogenase subunit alpha part 2 (pntAB) from Rickettsia prowazekii (strain Madrid E).